Consider the following 319-residue polypeptide: Major intracellular serine protease (319 aa).

Residues 1–17 (MNGEIRLIPYVTNEQIM) constitute a propeptide that is removed on maturation. The 285-residue stretch at 23–307 (PEGIKVIKAP…FLYLTAPDEL (285 aa)) folds into the Peptidase S8 domain. Active-site charge relay system residues include aspartate 50, histidine 87, and serine 246.

Belongs to the peptidase S8 family. As to quaternary structure, homodimer.

Its subcellular location is the cytoplasm. Its function is as follows. Major intracellular protease produced by Bacillus subtilis. This chain is Major intracellular serine protease (isp), found in Bacillus subtilis (strain 168).